Reading from the N-terminus, the 63-residue chain is UPF0434 protein Mmar10_2939 (63 aa).

It belongs to the UPF0434 family.

In Maricaulis maris (strain MCS10) (Caulobacter maris), this protein is UPF0434 protein Mmar10_2939.